We begin with the raw amino-acid sequence, 305 residues long: MSADSAPQRILLVTGLLGAGKTTALRTLEDMGWEAIDNFPIRLLDRLLETEPGSARMEPGAPMAIGFDTRTRGFDPSRTIELVKKLSQRSDLQITTLFLDCAGTELERRYNETRRRHPMSEDKPAATGIAAERELLEPLRRWADVVITTTSFTTNDLQQAIRDQFGGEIATPTTITISSFGFSRGMPPLADLVFDMRFLANPHWVDDLRPQTGRDKAVGEYIRKDPAFDEAFERIRDLLLLLLPRYQEQGKAYVHIAFGCTGGRHRSVFMAEQIASALREAGFSPTLLHRNLSSRAADLLEGVKG.

15–22 (GLLGAGKT) provides a ligand contact to ATP. Residue 68 to 71 (DTRT) participates in GTP binding.

The protein belongs to the RapZ-like family.

In terms of biological role, displays ATPase and GTPase activities. This chain is Nucleotide-binding protein Saro_2904, found in Novosphingobium aromaticivorans (strain ATCC 700278 / DSM 12444 / CCUG 56034 / CIP 105152 / NBRC 16084 / F199).